A 567-amino-acid chain; its full sequence is Urease subunit alpha (567 aa).

In terms of domain architecture, Urease spans 128 to 567; it reads GGIDPHIHFI…LPLAQLYHLF (440 aa). Ni(2+) is bound by residues H133, H135, and K216. K216 carries the post-translational modification N6-carboxylysine. H218 contacts substrate. Residues H245 and H271 each contribute to the Ni(2+) site. H319 functions as the Proton donor in the catalytic mechanism. Residue D359 participates in Ni(2+) binding.

The protein belongs to the metallo-dependent hydrolases superfamily. Urease alpha subunit family. In terms of assembly, heterotrimer of UreA (gamma), UreB (beta) and UreC (alpha) subunits. Three heterotrimers associate to form the active enzyme. Ni cation serves as cofactor. In terms of processing, carboxylation allows a single lysine to coordinate two nickel ions.

It is found in the cytoplasm. It carries out the reaction urea + 2 H2O + H(+) = hydrogencarbonate + 2 NH4(+). Its pathway is nitrogen metabolism; urea degradation; CO(2) and NH(3) from urea (urease route): step 1/1. This Marinobacter nauticus (strain ATCC 700491 / DSM 11845 / VT8) (Marinobacter aquaeolei) protein is Urease subunit alpha.